We begin with the raw amino-acid sequence, 379 residues long: Putative acetyl-CoA C-acetyltransferase VraB (379 aa).

Cysteine 86 functions as the Acyl-thioester intermediate in the catalytic mechanism. Catalysis depends on histidine 338, which acts as the Proton acceptor.

It belongs to the thiolase-like superfamily. Thiolase family.

This Staphylococcus aureus (strain Mu3 / ATCC 700698) protein is Putative acetyl-CoA C-acetyltransferase VraB (vraB).